Reading from the N-terminus, the 299-residue chain is Probable lipid kinase YegS (299 aa).

In terms of domain architecture, DAGKc spans 2–133 (AEFPASLLIL…IDMAQVNKQT (132 aa)). Residues Thr40, 66-72 (GDGTINE), and Thr95 each bind ATP. Mg(2+)-binding residues include Leu215, Asp218, and Leu220. Glu271 (proton acceptor) is an active-site residue.

It belongs to the diacylglycerol/lipid kinase family. YegS lipid kinase subfamily. It depends on Mg(2+) as a cofactor. Ca(2+) is required as a cofactor.

Its subcellular location is the cytoplasm. Probably phosphorylates lipids; the in vivo substrate is unknown. In Escherichia coli O9:H4 (strain HS), this protein is Probable lipid kinase YegS.